A 375-amino-acid chain; its full sequence is Ribonuclease D (375 aa).

The 3'-5' exonuclease domain occupies 3–169 (YQMITTDDAL…LPITAKLMVE (167 aa)). Positions 210–289 (RTRQLACLQL…EKAQTLPEDA (80 aa)) constitute an HRDC domain.

The protein belongs to the RNase D family. A divalent metal cation serves as cofactor.

The protein resides in the cytoplasm. The enzyme catalyses Exonucleolytic cleavage that removes extra residues from the 3'-terminus of tRNA to produce 5'-mononucleotides.. Its function is as follows. Exonuclease involved in the 3' processing of various precursor tRNAs. Initiates hydrolysis at the 3'-terminus of an RNA molecule and releases 5'-mononucleotides. The sequence is that of Ribonuclease D from Escherichia coli (strain K12).